We begin with the raw amino-acid sequence, 87 residues long: Chromosomal protein MC1b (87 aa).

Protects DNA against thermal denaturation and modulates transcription. The protein is Chromosomal protein MC1b of Methanothrix soehngenii (Methanosaeta concilii).